The sequence spans 237 residues: Apoptosis regulator OPG045 (237 aa).

Belongs to the orthopoxvirus OPG045 family. As to quaternary structure, interacts with host BAK1, BAX and BID.

Its subcellular location is the host mitochondrion outer membrane. The protein localises to the host cytoplasm. In terms of biological role, plays a role in the inhibition of host apoptosis. Interacts with host BAX and thereby inhibits its activity. The protein is Apoptosis regulator OPG045 (OPG045) of Homo sapiens (Human).